We begin with the raw amino-acid sequence, 270 residues long: Thiosulfate dehydrogenase (270 aa).

The first 27 residues, 1–27 (MRGDVRVHTASPIAAAWLLAVGLVAHA), serve as a signal peptide directing secretion. 2 Cytochrome c domains span residues 44 to 158 (PDGA…PVGA) and 174 to 260 (PDGV…LTHP). Residues Cys76, Cys79, His80, Cys187, Cys190, and His191 each contribute to the heme c site.

In terms of assembly, monomer. In terms of processing, binds 2 heme c groups covalently per subunit.

The protein localises to the periplasm. The enzyme catalyses 2 thiosulfate + 2 Fe(III)-[cytochrome c] = tetrathionate + 2 Fe(II)-[cytochrome c] + 2 H(+). Functionally, catalyzes the oxidation of 2 molecules of thiosulfate to tetrathionate. In Allochromatium vinosum (strain ATCC 17899 / DSM 180 / NBRC 103801 / NCIMB 10441 / D) (Chromatium vinosum), this protein is Thiosulfate dehydrogenase (tsdA).